Consider the following 334-residue polypeptide: Methionine import ATP-binding protein MetN (334 aa).

The ABC transporter domain maps to 7–246 (VEFRSVSKVF…PRSAPARAFV (240 aa)). 43-50 (GYSGAGKS) contributes to the ATP binding site.

The protein belongs to the ABC transporter superfamily. Methionine importer (TC 3.A.1.24) family. The complex is composed of two ATP-binding proteins (MetN), two transmembrane proteins (MetI) and a solute-binding protein (MetQ).

The protein resides in the cell membrane. The catalysed reaction is L-methionine(out) + ATP + H2O = L-methionine(in) + ADP + phosphate + H(+). It catalyses the reaction D-methionine(out) + ATP + H2O = D-methionine(in) + ADP + phosphate + H(+). Functionally, part of the ABC transporter complex MetNIQ involved in methionine import. Responsible for energy coupling to the transport system. The polypeptide is Methionine import ATP-binding protein MetN (Nocardia farcinica (strain IFM 10152)).